Reading from the N-terminus, the 588-residue chain is Pescadillo homolog (588 aa).

A required for 28S ribosomal RNA processing region spans residues 1–54; the sequence is MGGLEKKKYERGSATNYITRNKARKKLQLSLADFRRLCILKGIYPHEPKHKKKV. A sufficient for nucleolar localization region spans residues 1 to 257; that stretch reads MGGLEKKKYE…PKLEGQAQAE (257 aa). K98 bears the N6-acetyllysine mark. Positions 294-314 are disordered; it reads EAEVDEFPTDGEMSAQEEDRR. The tract at residues 306-415 is sufficient for interaction with MAP1B; that stretch reads MSAQEEDRRK…LLLPVAEYFS (110 aa). Residues 322 to 415 form the BRCT domain; sequence KHKKLFEGLK…LLLPVAEYFS (94 aa). The interval 448 to 515 is disordered; sequence GEDPGNLNES…GKKPRVMAGT (68 aa). Residues 456–486 are compositionally biased toward acidic residues; the sequence is ESEEEEEEDDNNEGDGDEEGENEEEEEDAEA. A compositionally biased stretch (basic and acidic residues) spans 487-508; that stretch reads GSEKEEEARLAALEEQRMEGKK. K517 is covalently cross-linked (Glycyl lysine isopeptide (Lys-Gly) (interchain with G-Cter in SUMO1); alternate). Residue K517 forms a Glycyl lysine isopeptide (Lys-Gly) (interchain with G-Cter in SUMO2); alternate linkage. The segment at 539–588 is required for 28S ribosomal RNA processing; it reads MMKKREKYLYQKIMFGKRRKIREANKLAEKRKAHDEAVRSEKKAKKARPE. The disordered stretch occupies residues 565 to 588; sequence LAEKRKAHDEAVRSEKKAKKARPE.

Belongs to the pescadillo family. In terms of assembly, component of the PeBoW complex, composed of BOP1, PES1 and WDR12. The complex is held together by BOP1, which interacts with PES1 via its N-terminal domain and with WDR12 via a high-affinity interaction between the seven-bladed beta-propeller domains of the 2 proteins. The PeBoW complex associates with the 66S pre-ribosome. The PeBoW complex also associates with DDX27, PES1 interacts directly with DDX27. Interacts with IRS1 and UBTF. May interact with MAP1B. Post-translationally, sumoylated. Significant levels are detected in a variety of cancer cell lines, including glioblastoma, breast carcinoma, colon carcinoma and cervical carcinoma cells. Levels are abnormally elevated in malignant tumors of astrocytic origin.

The protein resides in the nucleus. It is found in the nucleolus. The protein localises to the nucleoplasm. It localises to the chromosome. Component of the PeBoW complex, which is required for maturation of 28S and 5.8S ribosomal RNAs and formation of the 60S ribosome. This is Pescadillo homolog from Homo sapiens (Human).